The chain runs to 502 residues: Probable zinc metalloprotease MGG_02107 (502 aa).

Residues 1–21 form the signal peptide; it reads MRSPPGAVAALASVAAQLATA. His-182, Asp-202, and Glu-235 together coordinate Zn(2+). Residue Asn-250 is glycosylated (N-linked (GlcNAc...) asparagine). Asp-262 is a Zn(2+) binding site. The interval 284–307 is disordered; it reads QGGSPAGESKERAETRASIGGEND. Residues Asn-375, Asn-417, and Asn-427 are each glycosylated (N-linked (GlcNAc...) asparagine). The Fibronectin type-III domain maps to 414–502; it reads QVRNVTVDTS…KSPATMPFPG (89 aa).

It belongs to the peptidase M28 family. M28B subfamily. The cofactor is Zn(2+).

It localises to the secreted. The chain is Probable zinc metalloprotease MGG_02107 from Pyricularia oryzae (strain 70-15 / ATCC MYA-4617 / FGSC 8958) (Rice blast fungus).